The following is a 58-amino-acid chain: uncharacterized protein (58 aa).

This is an uncharacterized protein from Bacillus anthracis.